We begin with the raw amino-acid sequence, 137 residues long: Large ribosomal subunit protein uL16 (137 aa).

The protein belongs to the universal ribosomal protein uL16 family. As to quaternary structure, part of the 50S ribosomal subunit.

Binds 23S rRNA and is also seen to make contacts with the A and possibly P site tRNAs. The chain is Large ribosomal subunit protein uL16 from Tolumonas auensis (strain DSM 9187 / NBRC 110442 / TA 4).